A 398-amino-acid chain; its full sequence is Probable aminomethyltransferase (398 aa).

The protein belongs to the GcvT family. In terms of assembly, the glycine cleavage system is composed of four proteins: P, T, L and H.

The catalysed reaction is N(6)-[(R)-S(8)-aminomethyldihydrolipoyl]-L-lysyl-[protein] + (6S)-5,6,7,8-tetrahydrofolate = N(6)-[(R)-dihydrolipoyl]-L-lysyl-[protein] + (6R)-5,10-methylene-5,6,7,8-tetrahydrofolate + NH4(+). Its function is as follows. The glycine cleavage system catalyzes the degradation of glycine. This chain is Probable aminomethyltransferase, found in Pyrococcus furiosus (strain ATCC 43587 / DSM 3638 / JCM 8422 / Vc1).